The primary structure comprises 77 residues: Putative defensin-like protein 60 (77 aa).

The N-terminal stretch at 1-25 (MKMNITKSYVILFLVVVMTNSLSNS) is a signal peptide. Intrachain disulfides connect cysteine 41–cysteine 75, cysteine 45–cysteine 68, cysteine 54–cysteine 73, and cysteine 58–cysteine 74.

The protein belongs to the DEFL family.

It localises to the secreted. The polypeptide is Putative defensin-like protein 60 (Arabidopsis thaliana (Mouse-ear cress)).